The primary structure comprises 172 residues: Counting factor-associated protein B (172 aa).

A signal peptide spans 1 to 21; the sequence is MKLLNSLILLVLTCLVSSINT. 2 N-linked (GlcNAc...) asparagine glycosylation sites follow: Asn37 and Asn153.

The protein resides in the secreted. This is Counting factor-associated protein B (cfaB) from Dictyostelium discoideum (Social amoeba).